Consider the following 121-residue polypeptide: Dihydroneopterin aldolase (121 aa).

Residues Glu-25 and Met-114 each coordinate substrate.

It belongs to the archaeal dihydroneopterin aldolase family. Homotetramer.

The enzyme catalyses 7,8-dihydroneopterin = 6-hydroxymethyl-7,8-dihydropterin + glycolaldehyde. It participates in cofactor biosynthesis; 5,6,7,8-tetrahydromethanopterin biosynthesis. Functionally, catalyzes the conversion of 7,8-dihydroneopterin (H2Neo) to 6-hydroxymethyl-7,8-dihydropterin (6-HMD). This is Dihydroneopterin aldolase from Methanocaldococcus jannaschii (strain ATCC 43067 / DSM 2661 / JAL-1 / JCM 10045 / NBRC 100440) (Methanococcus jannaschii).